The primary structure comprises 478 residues: Ribulose bisphosphate carboxylase large chain (478 aa).

Positions 1-2 (MS) are excised as a propeptide. N123 and T173 together coordinate substrate. K175 functions as the Proton acceptor in the catalytic mechanism. Residue K177 participates in substrate binding. 3 residues coordinate Mg(2+): K201, D203, and E204. At K201 the chain carries N6-carboxylysine. Phosphoserine is present on S208. The Proton acceptor role is filled by H294. Substrate-binding residues include R295 and H327. T330 carries the phosphothreonine modification. S379 lines the substrate pocket.

Belongs to the RuBisCO large chain family. Type I subfamily. In terms of assembly, heterohexadecamer of 8 large chains and 8 small chains; disulfide-linked. The disulfide link is formed within the large subunit homodimers. Requires Mg(2+) as cofactor. In terms of processing, the disulfide bond which can form in the large chain dimeric partners within the hexadecamer appears to be associated with oxidative stress and protein turnover.

The protein localises to the plastid. The protein resides in the chloroplast. The catalysed reaction is 2 (2R)-3-phosphoglycerate + 2 H(+) = D-ribulose 1,5-bisphosphate + CO2 + H2O. It carries out the reaction D-ribulose 1,5-bisphosphate + O2 = 2-phosphoglycolate + (2R)-3-phosphoglycerate + 2 H(+). RuBisCO catalyzes two reactions: the carboxylation of D-ribulose 1,5-bisphosphate, the primary event in carbon dioxide fixation, as well as the oxidative fragmentation of the pentose substrate in the photorespiration process. Both reactions occur simultaneously and in competition at the same active site. The protein is Ribulose bisphosphate carboxylase large chain of Lepidium virginicum (Virginia pepperweed).